Here is a 399-residue protein sequence, read N- to C-terminus: tRNA-dihydrouridine(16/17) synthase [NAD(P)(+)] (399 aa).

FMN is bound by residues 24–26 (PMV) and Q80. C109 serves as the catalytic Proton donor. FMN is bound by residues K148, H176, 211 to 213 (NGN), and 235 to 236 (AE).

The protein belongs to the Dus family. Dus1 subfamily. FMN is required as a cofactor.

It is found in the nucleus. The protein resides in the mitochondrion. The catalysed reaction is 5,6-dihydrouridine(16) in tRNA + NADP(+) = uridine(16) in tRNA + NADPH + H(+). It catalyses the reaction 5,6-dihydrouridine(16) in tRNA + NAD(+) = uridine(16) in tRNA + NADH + H(+). It carries out the reaction 5,6-dihydrouridine(17) in tRNA + NAD(+) = uridine(17) in tRNA + NADH + H(+). The enzyme catalyses 5,6-dihydrouridine(17) in tRNA + NADP(+) = uridine(17) in tRNA + NADPH + H(+). The catalysed reaction is a 5,6-dihydrouridine in mRNA + NAD(+) = a uridine in mRNA + NADH + H(+). It catalyses the reaction a 5,6-dihydrouridine in mRNA + NADP(+) = a uridine in mRNA + NADPH + H(+). Its function is as follows. Catalyzes the synthesis of dihydrouridine, a modified base found in the D-loop of most tRNAs. Also able to mediate dihydrouridylation of some mRNAs, thereby affecting their translation. This is tRNA-dihydrouridine(16/17) synthase [NAD(P)(+)] from Schizosaccharomyces pombe (strain 972 / ATCC 24843) (Fission yeast).